Reading from the N-terminus, the 372-residue chain is 4-hydroxy-3-methylbut-2-en-1-yl diphosphate synthase (flavodoxin) (372 aa).

4 residues coordinate [4Fe-4S] cluster: Cys-270, Cys-273, Cys-305, and Glu-312.

This sequence belongs to the IspG family. Requires [4Fe-4S] cluster as cofactor.

The catalysed reaction is (2E)-4-hydroxy-3-methylbut-2-enyl diphosphate + oxidized [flavodoxin] + H2O + 2 H(+) = 2-C-methyl-D-erythritol 2,4-cyclic diphosphate + reduced [flavodoxin]. It functions in the pathway isoprenoid biosynthesis; isopentenyl diphosphate biosynthesis via DXP pathway; isopentenyl diphosphate from 1-deoxy-D-xylulose 5-phosphate: step 5/6. Converts 2C-methyl-D-erythritol 2,4-cyclodiphosphate (ME-2,4cPP) into 1-hydroxy-2-methyl-2-(E)-butenyl 4-diphosphate. The chain is 4-hydroxy-3-methylbut-2-en-1-yl diphosphate synthase (flavodoxin) from Escherichia coli O139:H28 (strain E24377A / ETEC).